The primary structure comprises 243 residues: Ubiquinone/menaquinone biosynthesis C-methyltransferase UbiE (243 aa).

S-adenosyl-L-methionine-binding positions include Thr69, Asp90, and 116–117; that span reads DA.

The protein belongs to the class I-like SAM-binding methyltransferase superfamily. MenG/UbiE family.

The catalysed reaction is a 2-demethylmenaquinol + S-adenosyl-L-methionine = a menaquinol + S-adenosyl-L-homocysteine + H(+). The enzyme catalyses a 2-methoxy-6-(all-trans-polyprenyl)benzene-1,4-diol + S-adenosyl-L-methionine = a 5-methoxy-2-methyl-3-(all-trans-polyprenyl)benzene-1,4-diol + S-adenosyl-L-homocysteine + H(+). The protein operates within quinol/quinone metabolism; menaquinone biosynthesis; menaquinol from 1,4-dihydroxy-2-naphthoate: step 2/2. It participates in cofactor biosynthesis; ubiquinone biosynthesis. Functionally, methyltransferase required for the conversion of demethylmenaquinol (DMKH2) to menaquinol (MKH2) and the conversion of 2-polyprenyl-6-methoxy-1,4-benzoquinol (DDMQH2) to 2-polyprenyl-3-methyl-6-methoxy-1,4-benzoquinol (DMQH2). The polypeptide is Ubiquinone/menaquinone biosynthesis C-methyltransferase UbiE (Cupriavidus metallidurans (strain ATCC 43123 / DSM 2839 / NBRC 102507 / CH34) (Ralstonia metallidurans)).